Here is a 492-residue protein sequence, read N- to C-terminus: Lipopolysaccharide biosynthesis protein WzxC (492 aa).

Residues 1–12 (MSLREKTISGAK) lie on the Cytoplasmic side of the membrane. The chain crosses the membrane as a helical span at residues 13–33 (WSAIATVIIIGLGLVQMTVLA). The Periplasmic portion of the chain corresponds to 34–42 (RIIDNHQFG). Residues 43-63 (LLTVSLVIIALADTLSDFGIA) form a helical membrane-spanning segment. At 64 to 81 (NSIIQRKEISHLELTTLY) the chain is on the cytoplasmic side. Residues 82–102 (WLNVGLGIVVCVAVFLLSDLI) traverse the membrane as a helical segment. The Periplasmic portion of the chain corresponds to 103 to 104 (GD). The chain crosses the membrane as a helical span at residues 105-125 (VLNNPDLAPLIKTLSLAFVVI). At 126 to 157 (PHGQQFRALMQKELEFNKIGMIETSAVLAGFT) the chain is on the cytoplasmic side. Residues 158-178 (CTVVSAHFWPLAMTAILGYLV) traverse the membrane as a helical segment. At 179–236 (NSAVRTLLFGYFGRKIYRPGLHFSLASVAPNLRFGAWLTADSIINYLNTNLSTLVLAR) the chain is on the periplasmic side. A helical membrane pass occupies residues 237–257 (ILGAGVAGGYNLAYNVAVVPP). The Cytoplasmic portion of the chain corresponds to 258 to 288 (MKLNPIITRVLFPAFAKIQDDTEKLRVNFYK). Residues 289-309 (LLSVVGIINFPALLGLMVVSN) form a helical membrane-spanning segment. Residues 310–322 (NFVPLVFGEKWNS) are Periplasmic-facing. Residues 323 to 343 (IIPVLQLLCVVGLLRSVGNPI) traverse the membrane as a helical segment. Residues 344–364 (GSLLMAKARVDISFKFNVFKT) are Cytoplasmic-facing. A helical transmembrane segment spans residues 365–385 (FLFIPAIVIGGQMAGAIGVTL). Position 386 (Gly-386) is a topological domain, periplasmic. Residues 387-407 (FLLVQIINTILSYFVMIKPVL) traverse the membrane as a helical segment. The Cytoplasmic segment spans residues 408–417 (GSSYRQYILS). A helical membrane pass occupies residues 418 to 438 (LWLPFYLSLPTLVVSYALGIV). Over 439 to 445 (LKGQLAL) the chain is Periplasmic. The chain crosses the membrane as a helical span at residues 446 to 466 (GMLLAVQIATGVLAFVVMIVL). Topologically, residues 467-492 (SRHPLVVEVKRQFCRSEKMKMLLRAG) are cytoplasmic.

The protein belongs to the polysaccharide synthase family.

The protein localises to the cell inner membrane. Its pathway is bacterial outer membrane biogenesis; lipopolysaccharide biosynthesis. In Escherichia coli (strain K12), this protein is Lipopolysaccharide biosynthesis protein WzxC (wzxC).